Reading from the N-terminus, the 555-residue chain is Glutamate--tRNA ligase (555 aa).

The 'HIGH' region motif lies at Pro100–His110.

This sequence belongs to the class-I aminoacyl-tRNA synthetase family. Glutamate--tRNA ligase type 2 subfamily.

Its subcellular location is the cytoplasm. It carries out the reaction tRNA(Glu) + L-glutamate + ATP = L-glutamyl-tRNA(Glu) + AMP + diphosphate. In terms of biological role, catalyzes the attachment of glutamate to tRNA(Glu) in a two-step reaction: glutamate is first activated by ATP to form Glu-AMP and then transferred to the acceptor end of tRNA(Glu). This Methanococcus maripaludis (strain DSM 14266 / JCM 13030 / NBRC 101832 / S2 / LL) protein is Glutamate--tRNA ligase.